Consider the following 120-residue polypeptide: Methylglyoxal synthase (120 aa).

An MGS-like domain is found at 1–120; that stretch reads MRIALIAHDN…TAEILVESVL (120 aa). Substrate-binding positions include H8, K12, and 54 to 55; that span reads SG. D60 functions as the Proton donor/acceptor in the catalytic mechanism. A substrate-binding site is contributed by H87.

It belongs to the methylglyoxal synthase family.

The catalysed reaction is dihydroxyacetone phosphate = methylglyoxal + phosphate. Functionally, catalyzes the formation of methylglyoxal from dihydroxyacetone phosphate. In Natranaerobius thermophilus (strain ATCC BAA-1301 / DSM 18059 / JW/NM-WN-LF), this protein is Methylglyoxal synthase.